Consider the following 436-residue polypeptide: Zinc finger protein 101 (436 aa).

Residues 4–82 (VAFEDVAVNF…RKEGNEHRET (79 aa)) form the KRAB domain. The C2H2-type 1 zinc finger occupies 102–124 (CKCSVCGKVFLRHSFLDRHMRAH). The span at 128-141 (KRSECGGEWRETPR) shows a compositional bias: basic and acidic residues. The interval 128–164 (KRSECGGEWRETPRKQKQHGKASISPSSGARRTVTPT) is disordered. Residues 151–163 (ISPSSGARRTVTP) are compositionally biased toward polar residues. Residues 169 to 191 (YECKVCGKAFNSPNLFQIHQRTH) form a C2H2-type 2 zinc finger. A C2H2-type 3; degenerate zinc finger spans residues 197–219 (YKCREIVRAFTVSSFFRKHGKMH). C2H2-type zinc fingers lie at residues 225 to 247 (YECK…VRTH), 253 to 276 (YKCK…IRSH), 282 to 304 (HQCQ…ERTH), 310 to 332 (YECQ…ERAH), 338 to 360 (YECN…KKTH), 366 to 388 (YECT…EMTH), and 394 to 416 (FDCK…ERTH).

This sequence belongs to the krueppel C2H2-type zinc-finger protein family. In terms of tissue distribution, expressed in a variety of adult and fetal tissues.

The protein resides in the nucleus. Functionally, may be involved in transcriptional regulation. This is Zinc finger protein 101 (ZNF101) from Homo sapiens (Human).